The sequence spans 182 residues: 7-carboxy-7-deazaguanine synthase (182 aa).

Residues 12–14 (LQG) and R27 contribute to the substrate site. Positions 18–182 (HTGTPAVFIR…LQTHKLIDIR (165 aa)) constitute a Radical SAM core domain. Positions 31, 35, and 38 each coordinate [4Fe-4S] cluster. A Mg(2+)-binding site is contributed by T40. A substrate-binding site is contributed by T68. S-adenosyl-L-methionine is bound by residues G70 and 111–113 (SPK).

This sequence belongs to the radical SAM superfamily. 7-carboxy-7-deazaguanine synthase family. Homodimer. [4Fe-4S] cluster is required as a cofactor. It depends on S-adenosyl-L-methionine as a cofactor. The cofactor is Mg(2+).

It carries out the reaction 6-carboxy-5,6,7,8-tetrahydropterin + H(+) = 7-carboxy-7-deazaguanine + NH4(+). The protein operates within purine metabolism; 7-cyano-7-deazaguanine biosynthesis. Catalyzes the complex heterocyclic radical-mediated conversion of 6-carboxy-5,6,7,8-tetrahydropterin (CPH4) to 7-carboxy-7-deazaguanine (CDG), a step common to the biosynthetic pathways of all 7-deazapurine-containing compounds. The sequence is that of 7-carboxy-7-deazaguanine synthase from Bacteroides thetaiotaomicron (strain ATCC 29148 / DSM 2079 / JCM 5827 / CCUG 10774 / NCTC 10582 / VPI-5482 / E50).